The primary structure comprises 394 residues: Glycerol-1-phosphate dehydrogenase [NAD(P)+] (394 aa).

NAD(+)-binding positions include D54, 116-120 (GTIHD), and 138-141 (TAPS). A substrate-binding site is contributed by D143. Position 147 (S147) interacts with NAD(+). D190 serves as a coordination point for substrate. The Ni(2+) site is built by D190 and H270. H274 contacts substrate. Residue H290 participates in Ni(2+) binding.

This sequence belongs to the glycerol-1-phosphate dehydrogenase family. Homodimer. Ni(2+) is required as a cofactor.

The protein localises to the cytoplasm. The catalysed reaction is sn-glycerol 1-phosphate + NAD(+) = dihydroxyacetone phosphate + NADH + H(+). It catalyses the reaction sn-glycerol 1-phosphate + NADP(+) = dihydroxyacetone phosphate + NADPH + H(+). Catalyzes the NAD(P)H-dependent reduction of dihydroxyacetonephosphate (DHAP or glycerone phosphate) to glycerol 1-phosphate (G1P). The G1P thus generated is probably used for the synthesis of phosphoglycerolipids in Gram-positive bacterial species. This chain is Glycerol-1-phosphate dehydrogenase [NAD(P)+], found in Bacillus velezensis (strain DSM 23117 / BGSC 10A6 / LMG 26770 / FZB42) (Bacillus amyloliquefaciens subsp. plantarum).